We begin with the raw amino-acid sequence, 90 residues long: Hypnin-A3 (90 aa).

Functionally, lectin specific for core(alpha 1-6)fucosylated N-glycans. Inhibits platelet aggregation. This is Hypnin-A3 from Hypnea japonica (Japanese red alga).